The chain runs to 290 residues: 4-hydroxybenzoate octaprenyltransferase (290 aa).

8 helical membrane passes run 33–53 (LAAL…AVFV), 91–111 (LGVR…FVLV), 116–136 (WEAV…PFTK), 138–158 (FFAM…VIAF), 165–185 (VPAT…AYDT), 212–232 (VAAI…VLAP), 237–257 (WPLW…FTLI), and 269–289 (FSKS…GYLL).

The protein belongs to the UbiA prenyltransferase family. It depends on Mg(2+) as a cofactor.

Its subcellular location is the cell inner membrane. It carries out the reaction all-trans-octaprenyl diphosphate + 4-hydroxybenzoate = 4-hydroxy-3-(all-trans-octaprenyl)benzoate + diphosphate. Its pathway is cofactor biosynthesis; ubiquinone biosynthesis. Catalyzes the prenylation of para-hydroxybenzoate (PHB) with an all-trans polyprenyl group. Mediates the second step in the final reaction sequence of ubiquinone-8 (UQ-8) biosynthesis, which is the condensation of the polyisoprenoid side chain with PHB, generating the first membrane-bound Q intermediate 3-octaprenyl-4-hydroxybenzoate. This Acidovorax ebreus (strain TPSY) (Diaphorobacter sp. (strain TPSY)) protein is 4-hydroxybenzoate octaprenyltransferase.